A 314-amino-acid chain; its full sequence is Ribosomal RNA small subunit methyltransferase H (314 aa).

Residues Gly31 to Tyr33, Asp49, Phe76, Asp118, and Gln125 contribute to the S-adenosyl-L-methionine site.

This sequence belongs to the methyltransferase superfamily. RsmH family.

Its subcellular location is the cytoplasm. The catalysed reaction is cytidine(1402) in 16S rRNA + S-adenosyl-L-methionine = N(4)-methylcytidine(1402) in 16S rRNA + S-adenosyl-L-homocysteine + H(+). Functionally, specifically methylates the N4 position of cytidine in position 1402 (C1402) of 16S rRNA. This is Ribosomal RNA small subunit methyltransferase H from Wolbachia pipientis wMel.